A 211-amino-acid chain; its full sequence is Putative ATP-dependent Clp protease proteolytic subunit-like (211 aa).

Positions 1-24 (MTRPSARHVLPEFTERTSAGTRTS) are disordered. Residue His129 is part of the active site.

The protein belongs to the peptidase S14 family.

In terms of biological role, has lost one of the conserved residue (Ser) proposed to be part of the active site. Therefore it could be inactive. This Streptomyces coelicolor (strain ATCC BAA-471 / A3(2) / M145) protein is Putative ATP-dependent Clp protease proteolytic subunit-like.